Reading from the N-terminus, the 320-residue chain is Ribosomal RNA large subunit methyltransferase F (320 aa).

The disordered stretch occupies residues 1 to 20; the sequence is MHKSANSKTRKQSKGLHPRN.

This sequence belongs to the methyltransferase superfamily. METTL16/RlmF family.

The protein resides in the cytoplasm. The catalysed reaction is adenosine(1618) in 23S rRNA + S-adenosyl-L-methionine = N(6)-methyladenosine(1618) in 23S rRNA + S-adenosyl-L-homocysteine + H(+). Specifically methylates the adenine in position 1618 of 23S rRNA. The chain is Ribosomal RNA large subunit methyltransferase F from Saccharophagus degradans (strain 2-40 / ATCC 43961 / DSM 17024).